Consider the following 582-residue polypeptide: Hemagglutinin-neuraminidase (582 aa).

Over 1–34 (MEPSKLFTMSDNATFAPGPVINAADKKTFRTCFR) the chain is Intravirion. The helical; Signal-anchor for type II membrane protein transmembrane segment at 35–55 (ILVLSVQAVTLILVIVTLGEL) threads the bilayer. Topologically, residues 56-582 (VRMINDQGLS…LPVLTRLTIT (527 aa)) are virion surface. The N-linked (GlcNAc...) asparagine; by host glycan is linked to Asn-127. Disulfide bonds link Cys-178-Cys-202, Cys-192-Cys-253, and Cys-244-Cys-257. Residues 240–245 (NRKSCS) are involved in neuraminidase activity. 2 N-linked (GlcNAc...) asparagine; by host glycosylation sites follow: Asn-284 and Asn-329. 3 disulfides stabilise this stretch: Cys-350–Cys-471, Cys-382–Cys-392, and Cys-465–Cys-475. Residues Asn-400, Asn-448, and Asn-464 are each glycosylated (N-linked (GlcNAc...) asparagine; by host). Residue Asn-507 is glycosylated (N-linked (GlcNAc...) asparagine; by host). An intrachain disulfide couples Cys-545 to Cys-556.

The protein belongs to the paramyxoviruses hemagglutinin-neuraminidase family. Homotetramer; composed of disulfide-linked homodimers. Interacts with F protein trimer.

It is found in the virion membrane. The protein resides in the host cell membrane. The enzyme catalyses Hydrolysis of alpha-(2-&gt;3)-, alpha-(2-&gt;6)-, alpha-(2-&gt;8)- glycosidic linkages of terminal sialic acid residues in oligosaccharides, glycoproteins, glycolipids, colominic acid and synthetic substrates.. In terms of biological role, attaches the virus to alpha-2,3-linked sialic acid-containing cell receptors and thereby initiating infection. Binding of HN protein to the receptor induces a conformational change that allows the F protein to trigger virion/cell membranes fusion. Binds to the glycan motifs sialyl Lewis (SLe) and GM2 ganglioside (GM2-glycan). Its function is as follows. Neuraminidase (sialidase) activity ensures the efficient spread of the virus by dissociating the mature virions from the neuraminic acid containing glycoproteins. In Mumps virus genotype B (strain Miyahara vaccine) (MuV), this protein is Hemagglutinin-neuraminidase (HN).